The primary structure comprises 635 residues: Very-long-chain aldehyde decarbonylase GL1-6 (635 aa).

The next 4 membrane-spanning stretches (helical) occupy residues 46 to 66 (LLNF…QLWI), 100 to 120 (IILT…AQVA), 127 to 147 (GMVV…YWLH), and 183 to 203 (VVYF…GTVS). The region spanning 139 to 273 (VEFLYYWLHR…MPVYDYIYGT (135 aa)) is the Fatty acid hydroxylase domain.

Belongs to the sterol desaturase family. Homodimer.

Its subcellular location is the endoplasmic reticulum membrane. It carries out the reaction a long-chain fatty aldehyde + 2 NADPH + O2 + H(+) = a long-chain alkane + formate + 2 NADP(+) + H2O. Its function is as follows. Aldehyde decarbonylase involved in the conversion of aldehydes to alkanes. Core component of a very-long-chain alkane synthesis complex. The sequence is that of Very-long-chain aldehyde decarbonylase GL1-6 from Oryza sativa subsp. indica (Rice).